The primary structure comprises 243 residues: Venom nerve growth factor (243 aa).

The N-terminal stretch at 1–18 (MSMLCYTLIIAFLIGIWA) is a signal peptide. The propeptide occupies 19-125 (APKSEDNVPL…TLNRNIWANN (107 aa)). Residues 47 to 66 (GLKTSRNTDQHHPTPKKSED) are compositionally biased toward basic and acidic residues. The interval 47–70 (GLKTSRNTDQHHPTPKKSEDQELG) is disordered. Cystine bridges form between Cys-139-Cys-204, Cys-182-Cys-232, and Cys-192-Cys-234. Asn-148 is a glycosylation site (N-linked (GlcNAc...) asparagine).

Belongs to the NGF-beta family. Homodimer. Expressed by the venom gland.

It localises to the secreted. Nerve growth factor is important for the development and maintenance of the sympathetic and sensory nervous systems. It stimulates division and differentiation of sympathetic and embryonic sensory neurons as well as basal forebrain cholinergic neurons in the brain. Its relevance in the snake venom is not clear. However, it has been shown to inhibit metalloproteinase-dependent proteolysis of platelet glycoprotein Ib alpha, suggesting a metalloproteinase inhibition to prevent metalloprotease autodigestion and/or protection against prey proteases. Binds a lipid between the two protein chains in the homodimer. The lipid-bound form promotes histamine relase from mouse mast cells, contrary to the lipid-free form. The protein is Venom nerve growth factor of Bungarus multicinctus (Many-banded krait).